Here is a 268-residue protein sequence, read N- to C-terminus: MRRIDFRFAELRANGRKALIPFITAGDPSLEATVPVMHALVRAGADVIELGVPFSDPMADGPTIQRSSERALGRGAGLAYVLEAVHEFRREDAATPVVLMGYLNPIEIHGTRRFAEAAVAAGVDGLLLVDLPPEEADETRAIFTEVGLALIALASPTTSEQRLDMLCSTAQGYLYYVSFAGVTGASNLLDTYAASDRLRQLRQRAGAPVVAGFGIKDAASAAAMAVDADGVVVGSALVAALAEADDVRSARERAEAFLAPLRQALDQA.

Active-site proton acceptor residues include Glu-49 and Asp-60.

Belongs to the TrpA family. In terms of assembly, tetramer of two alpha and two beta chains.

It carries out the reaction (1S,2R)-1-C-(indol-3-yl)glycerol 3-phosphate + L-serine = D-glyceraldehyde 3-phosphate + L-tryptophan + H2O. The protein operates within amino-acid biosynthesis; L-tryptophan biosynthesis; L-tryptophan from chorismate: step 5/5. Its function is as follows. The alpha subunit is responsible for the aldol cleavage of indoleglycerol phosphate to indole and glyceraldehyde 3-phosphate. The protein is Tryptophan synthase alpha chain of Xanthomonas oryzae pv. oryzae (strain PXO99A).